Here is a 181-residue protein sequence, read N- to C-terminus: Regulator of G-protein signaling 5 (181 aa).

Residues 64-180 (SLDKLLQSNY…VRSEFYKELI (117 aa)) form the RGS domain.

It localises to the cytoplasm. The protein localises to the membrane. Functionally, inhibits signal transduction by increasing the GTPase activity of G protein alpha subunits thereby driving them into their inactive GDP-bound form. Binds to G(i)-alpha and G(o)-alpha, but not to G(s)-alpha. The sequence is that of Regulator of G-protein signaling 5 (Rgs5) from Rattus norvegicus (Rat).